Consider the following 383-residue polypeptide: Outer membrane protein Omp-EA (383 aa).

The signal sequence occupies residues 1 to 21 (MKRNILAVLIPALLAAGAANA). The Periplasmic segment spans residues 22 to 30 (AEIYNKDGN). A beta stranded membrane pass occupies residues 31-45 (KLDLYGKVKAMRYLS). Over 46–58 (DADSNASNNADKS) the chain is Extracellular. A beta stranded membrane pass occupies residues 59 to 70 (YTRIGFKGQTLI). The Periplasmic portion of the chain corresponds to 71-74 (NDQL). The beta stranded transmembrane segment at 75 to 86 (TGYGQWEYNFSL) threads the bilayer. Topologically, residues 87 to 100 (SNSESSSDAQSGNK) are extracellular. Residues 101–109 (TRLGFAGLK) traverse the membrane as a beta stranded segment. The Periplasmic portion of the chain corresponds to 110–112 (LKD). The beta stranded transmembrane segment at 113-122 (YGSVDYGRNY) threads the bilayer. The Extracellular portion of the chain corresponds to 123-155 (GVIYDVEAFTDMMPEFGATGYTRTDTYMLTRGN). A beta stranded membrane pass occupies residues 156-164 (SMLTWRNSD). Over 165-171 (FFGLVDG) the chain is Periplasmic. Residues 172 to 178 (LKIALQY) traverse the membrane as a beta stranded segment. The Extracellular portion of the chain corresponds to 179–198 (QGKNEGSGTRATNVSNGDGY). A beta stranded membrane pass occupies residues 199–206 (GASLSYKI). At 207 to 209 (VEG) the chain is on the periplasmic side. A beta stranded transmembrane segment spans residues 210–219 (LTINGAMSSS). The Extracellular portion of the chain corresponds to 220–243 (NRLNANSASSTTSQKMAAYGSGGR). The chain crosses the membrane as a beta stranded span at residues 244–252 (AEAWATGLK). The Periplasmic portion of the chain corresponds to 253-258 (YDANGV). A beta stranded membrane pass occupies residues 259-268 (YLAGTYAETR). Residues 269-296 (NTNPFSGASYTFAGNSTATAVSGYANKV) are Extracellular-facing. Residues 297–307 (QNTELVAQYQF) form a beta stranded membrane-spanning segment. Topologically, residues 308–310 (DSG) are periplasmic. The chain crosses the membrane as a beta stranded span at residues 311 to 319 (LRPSLAYVQ). At 320-335 (TKAKDIENGIGDADLS) the chain is on the extracellular side. A beta stranded membrane pass occupies residues 336–346 (KFVDVAATYYF). Residues 347 to 351 (NKNMS) are Periplasmic-facing. Residues 352 to 361 (AFVDYKVNLL) form a beta stranded membrane-spanning segment. At 362-372 (SDSNKLHLNTD) the chain is on the extracellular side. The beta stranded transmembrane segment at 373–383 (DIVAVGLVYQF) threads the bilayer.

The protein belongs to the Gram-negative porin family. As to quaternary structure, homotrimer.

It localises to the cell outer membrane. May play an important role in maintaining pathogenicity in plants. In Erwinia amylovora (Fire blight bacteria), this protein is Outer membrane protein Omp-EA (omp-EA).